The sequence spans 557 residues: Potassium-transporting ATPase potassium-binding subunit (557 aa).

Helical transmembrane passes span 5–25 (GFLL…PLGS), 63–83 (LSAI…MLLG), 132–152 (GLTV…FALI), 170–190 (LLRI…LFFI), 253–273 (FVQM…FGEV), 283–303 (LLWA…WAEV), 329–349 (VLVS…AVIA), 356–376 (ALGG…FGGV), 379–399 (GLYG…LMIG), 416–436 (LTAL…ALAM), 484–504 (LLAL…MAIA), and 526–546 (LFVG…FIPA).

Belongs to the KdpA family. As to quaternary structure, the system is composed of three essential subunits: KdpA, KdpB and KdpC.

The protein resides in the cell inner membrane. Its function is as follows. Part of the high-affinity ATP-driven potassium transport (or Kdp) system, which catalyzes the hydrolysis of ATP coupled with the electrogenic transport of potassium into the cytoplasm. This subunit binds the periplasmic potassium ions and delivers the ions to the membrane domain of KdpB through an intramembrane tunnel. This chain is Potassium-transporting ATPase potassium-binding subunit, found in Escherichia coli O6:K15:H31 (strain 536 / UPEC).